A 193-amino-acid chain; its full sequence is Thymidine kinase (193 aa).

Residues 9 to 16 (STMNAGKS) and 87 to 90 (DEAN) each bind ATP. Residue Glu-88 is the Proton acceptor of the active site. Residues Cys-145, Cys-147, Cys-182, and His-185 each coordinate Zn(2+).

This sequence belongs to the thymidine kinase family. Homotetramer.

The protein localises to the cytoplasm. It carries out the reaction thymidine + ATP = dTMP + ADP + H(+). The chain is Thymidine kinase from Agrobacterium fabrum (strain C58 / ATCC 33970) (Agrobacterium tumefaciens (strain C58)).